We begin with the raw amino-acid sequence, 445 residues long: DNA repair protein RadA (445 aa).

Residues 10–27 form a C4-type zinc finger; that stretch reads CSNCANISNKWSGQCFDC. 90-97 serves as a coordination point for ATP; that stretch reads GEPGIGKS. Residues 249–253 carry the RadA KNRFG motif motif; it reads KNRFG. The interval 348–445 is lon-protease-like; the sequence is EIYLSIAGGL…HLQELKEIIK (98 aa).

Belongs to the RecA family. RadA subfamily.

In terms of biological role, DNA-dependent ATPase involved in processing of recombination intermediates, plays a role in repairing DNA breaks. Stimulates the branch migration of RecA-mediated strand transfer reactions, allowing the 3' invading strand to extend heteroduplex DNA faster. Binds ssDNA in the presence of ADP but not other nucleotides, has ATPase activity that is stimulated by ssDNA and various branched DNA structures, but inhibited by SSB. Does not have RecA's homology-searching function. This Rickettsia prowazekii (strain Madrid E) protein is DNA repair protein RadA.